The chain runs to 158 residues: Ankyrin repeat domain-containing protein 37 (158 aa).

ANK repeat units lie at residues 1-25 (MLLL…SVNA), 30-59 (CKQS…DLNQ), and 63-92 (LGEA…QIDL). The Nuclear localization signal motif lies at 129–149 (EHPDRNDCVAVLRQKRSLGSV).

Ubiquitinated by the CRL2(FEM1B) complex, leading to its degradation. As to expression, mainly expressed in testis, small intestine, colon, blood leukocytes and in pancreatic adenocarcinoma cells.

It localises to the nucleus. Its subcellular location is the cytoplasm. In Homo sapiens (Human), this protein is Ankyrin repeat domain-containing protein 37.